The sequence spans 423 residues: Torsin-4A (423 aa).

Residues 47–68 are disordered; sequence PGGGPDVGTGAPRPGCSPRAPR. 2 positions are modified to phosphoserine: Ser63 and Ser81. At Thr89 the chain carries Phosphothreonine. A Phosphoserine modification is found at Ser106. The chain crosses the membrane as a helical span at residues 122 to 138; sequence CLLLLVAIVGFQVLNAI. 194 to 201 contacts ATP; the sequence is GPSGVGKS.

The protein belongs to the ClpA/ClpB family. Torsin subfamily.

It is found in the membrane. The chain is Torsin-4A (TOR4A) from Homo sapiens (Human).